We begin with the raw amino-acid sequence, 378 residues long: Spermidine/putrescine import ATP-binding protein PotA (378 aa).

The 231-residue stretch at Val-18–Ile-248 folds into the ABC transporter domain. Position 50–57 (Gly-50–Thr-57) interacts with ATP.

Belongs to the ABC transporter superfamily. Spermidine/putrescine importer (TC 3.A.1.11.1) family. As to quaternary structure, the complex is composed of two ATP-binding proteins (PotA), two transmembrane proteins (PotB and PotC) and a solute-binding protein (PotD).

The protein localises to the cell inner membrane. The catalysed reaction is ATP + H2O + polyamine-[polyamine-binding protein]Side 1 = ADP + phosphate + polyamineSide 2 + [polyamine-binding protein]Side 1.. In terms of biological role, part of the ABC transporter complex PotABCD involved in spermidine/putrescine import. Responsible for energy coupling to the transport system. The sequence is that of Spermidine/putrescine import ATP-binding protein PotA from Shigella boydii serotype 4 (strain Sb227).